The chain runs to 380 residues: WAT1-related protein At2g37460 (380 aa).

A run of 10 helical transmembrane segments spans residues 16-36, 45-65, 71-91, 107-127, 142-162, 187-207, 216-236, 254-274, 282-302, and 306-326; these read FISMVVLQVGLAGMDILSKAV, VLVVYRHAVATIVMAPFAFYF, PKMTLMIFFKISLLGLLEPVI, FATAMYNVLPAITFVLAYIFG, VVGTLATVGGAMIMTLVKGPV, GAVLVTIGCFSYACFMILQAI, LSLTAWICLMGTIEGTAVALV, LTATYSGIVCSALAYYVGGVV, FVTAFSPLCMIIVAIMSTIIF, and MYLGRVLGAVVICAGLYLVIW. The 108-residue stretch at 27 to 134 folds into the EamA 1 domain; that stretch reads AGMDILSKAV…IFGLERVKLR (108 aa). One can recognise an EamA 2 domain in the interval 196 to 325; the sequence is FSYACFMILQ…VICAGLYLVI (130 aa).

This sequence belongs to the drug/metabolite transporter (DMT) superfamily. Plant drug/metabolite exporter (P-DME) (TC 2.A.7.4) family.

The protein localises to the membrane. The protein is WAT1-related protein At2g37460 of Arabidopsis thaliana (Mouse-ear cress).